The chain runs to 60 residues: Large ribosomal subunit protein uL30 (60 aa).

It belongs to the universal ribosomal protein uL30 family. In terms of assembly, part of the 50S ribosomal subunit.

This is Large ribosomal subunit protein uL30 from Bacillus cereus (strain G9842).